The sequence spans 294 residues: 4-hydroxy-tetrahydrodipicolinate synthase (294 aa).

Thr45 is a binding site for pyruvate. Catalysis depends on Tyr133, which acts as the Proton donor/acceptor. The active-site Schiff-base intermediate with substrate is the Lys162. Residue Ile204 participates in pyruvate binding.

The protein belongs to the DapA family. As to quaternary structure, homotetramer; dimer of dimers.

It is found in the cytoplasm. The catalysed reaction is L-aspartate 4-semialdehyde + pyruvate = (2S,4S)-4-hydroxy-2,3,4,5-tetrahydrodipicolinate + H2O + H(+). The protein operates within amino-acid biosynthesis; L-lysine biosynthesis via DAP pathway; (S)-tetrahydrodipicolinate from L-aspartate: step 3/4. Catalyzes the condensation of (S)-aspartate-beta-semialdehyde [(S)-ASA] and pyruvate to 4-hydroxy-tetrahydrodipicolinate (HTPA). The protein is 4-hydroxy-tetrahydrodipicolinate synthase of Bartonella henselae (strain ATCC 49882 / DSM 28221 / CCUG 30454 / Houston 1) (Rochalimaea henselae).